Here is a 179-residue protein sequence, read N- to C-terminus: Inner membrane-spanning protein YciB (179 aa).

The next 5 helical transmembrane spans lie at 22–42 (IYAA…YSWV), 50–70 (MALI…FFHN), 76–96 (WKVT…QWVM), 121–141 (LAWA…AFWL), and 149–169 (FKVF…GIYI).

It belongs to the YciB family.

It localises to the cell inner membrane. Its function is as follows. Plays a role in cell envelope biogenesis, maintenance of cell envelope integrity and membrane homeostasis. The chain is Inner membrane-spanning protein YciB from Shigella dysenteriae serotype 1 (strain Sd197).